The sequence spans 666 residues: Phosphoenolpyruvate carboxykinase (ATP) (666 aa).

Disordered regions lie at residues 1–68 (MATP…AHSP) and 91–132 (ASLT…HPAA). Polar residues predominate over residues 48–58 (APTTPNRSAPT). A compositionally biased stretch (low complexity) spans 109-123 (KGEAAAQGAPSTPRA). 364–371 (GLSGTGKT) is a binding site for ATP.

This sequence belongs to the phosphoenolpyruvate carboxykinase (ATP) family.

It localises to the cytoplasm. The catalysed reaction is oxaloacetate + ATP = phosphoenolpyruvate + ADP + CO2. It functions in the pathway carbohydrate biosynthesis; gluconeogenesis. This Zea mays (Maize) protein is Phosphoenolpyruvate carboxykinase (ATP).